The primary structure comprises 299 residues: Tyrosine recombinase XerD (299 aa).

In terms of domain architecture, Core-binding (CB) spans 3 to 88 (QQDNPLIEQF…AMRRLFQYLY (86 aa)). The Tyr recombinase domain maps to 109 to 293 (RLPKDLSEAQ…ATERLRQLHQ (185 aa)). Active-site residues include R149, K173, H245, R248, and H271. Y280 acts as the O-(3'-phospho-DNA)-tyrosine intermediate in catalysis.

It belongs to the 'phage' integrase family. XerD subfamily. As to quaternary structure, forms a cyclic heterotetrameric complex composed of two molecules of XerC and two molecules of XerD, in which XerC interacts with XerD via its C-terminal region, XerD interacts with XerC via its C-terminal region and so on.

It is found in the cytoplasm. With respect to regulation, ftsK may regulate the catalytic switch between XerC and XerD in the heterotetrameric complex during the two steps of the recombination process. Site-specific tyrosine recombinase, which acts by catalyzing the cutting and rejoining of the recombining DNA molecules. Binds cooperatively to specific DNA consensus sequences that are separated from XerC binding sites by a short central region, forming the heterotetrameric XerC-XerD complex that recombines DNA substrates. The complex is essential to convert dimers of the bacterial chromosome into monomers to permit their segregation at cell division. It also contributes to the segregational stability of plasmids. In the complex XerD specifically exchanges the bottom DNA strands. The sequence is that of Tyrosine recombinase XerD from Yersinia pestis.